A 311-amino-acid chain; its full sequence is Nod factor export ATP-binding protein I (311 aa).

Residues 13-243 (IDLAGVSKSY…QIGCPVIEIY (231 aa)) form the ABC transporter domain. 45 to 52 (GPNGAGKS) is a binding site for ATP.

Belongs to the ABC transporter superfamily. Lipooligosaccharide exporter (TC 3.A.1.102) family. In terms of assembly, the complex is composed of two ATP-binding proteins (NodI) and two transmembrane proteins (NodJ).

Its subcellular location is the cell inner membrane. Part of the ABC transporter complex NodIJ involved in the export of the nodulation factors (Nod factors), the bacterial signal molecules that induce symbiosis and subsequent nodulation induction. Nod factors are LCO (lipo-chitin oligosaccharide), a modified beta-1,4-linked N-acetylglucosamine oligosaccharide. This subunit is responsible for energy coupling to the transport system. This Rhizobium leguminosarum bv. viciae protein is Nod factor export ATP-binding protein I.